Consider the following 612-residue polypeptide: UvrABC system protein C (612 aa).

One can recognise a GIY-YIG domain in the interval 15–93 (HLPGVYRMYD…IKQHQPKYNV (79 aa)). The region spanning 203-238 (SQVIDYLMQKMEIAASELDFETAARFRDQIQSVRAV) is the UVR domain.

It belongs to the UvrC family. As to quaternary structure, interacts with UvrB in an incision complex.

Its subcellular location is the cytoplasm. Functionally, the UvrABC repair system catalyzes the recognition and processing of DNA lesions. UvrC both incises the 5' and 3' sides of the lesion. The N-terminal half is responsible for the 3' incision and the C-terminal half is responsible for the 5' incision. This chain is UvrABC system protein C, found in Haemophilus ducreyi (strain 35000HP / ATCC 700724).